The following is a 148-amino-acid chain: Large ribosomal subunit protein bL9 (148 aa).

Belongs to the bacterial ribosomal protein bL9 family.

Binds to the 23S rRNA. This Stutzerimonas stutzeri (strain A1501) (Pseudomonas stutzeri) protein is Large ribosomal subunit protein bL9.